A 588-amino-acid polypeptide reads, in one-letter code: MSSSYWSETSSSSCGTQLPEVLQCQPQHYHCYHQSSQAQQPPEKNVVYERVRTYSGPMNKVVQALDPFNSREVLSPLKTTSSYQNLVWSDHSQELHSPTLKISTCAPSTLHITQNTEQELHSPTVKVTTYPQTTIRKYVVQNPEQEPLSQFLRGSQFFPGNNVIYEKTIRKVEKLNTDQGCHPQAQCHHHIVQQPQVIRSAHWQQPDSSQQIQAITGNDPISTHIGNELCHSGSSQIHEQVIIQDDGPEKLDPRYFGELLADLSRKNTDLYHCLLEHLQRIGGSKQDFESTDESEDIKSLIPKGLSEFTKQQIRYILQMRGMSDKSLRLVLSTFSNIREELGHLQNDLTSLENDKMRLEKDLSFKETQLKEYEELLASVRANNHQQQQGLQDSSSKCQALEENNLSLRHTLSDMEYRLKELEYCKRNLEQENQNLRMQVSETCTGPMLQAKMDEIGNHYTEMVKNLRMEEDREICRLRSQLNQYHKDVSKREGSCSDFQFKLHELTSLLEEKDSLIKRQSEELSKLRQEIYSSHNQPSTGGRTTITTKKYRTQYPILGLLYDDYEYIPPGSETQTIVIEKTEDKYTCP.

2 coiled-coil regions span residues Ser332–Thr442 and Leu502–Ile530.

As to quaternary structure, interacts with nonmuscle actin.

It localises to the cell junction. The protein localises to the tight junction. Functionally, plays a key role in the organization of epithelial monolayers by regulating the actin cytoskeleton. May be involved in ovary development. The protein is Protein POF1B (POF1B) of Pongo abelii (Sumatran orangutan).